We begin with the raw amino-acid sequence, 157 residues long: MAAGDFRLCDVVLDDTIGRSTPDVEHERAVAIFDLIEENRFEPLGHSGGPYRLNISLMDSKLVFAIKTEEGGDVATHILSLTPFRRIVKDYFMICESYYEAIRSATPSRIEAIDMGRRGIHNEGSQTLKDRLAGKIEVDFDTARRLFTLVCVLYWRG.

It belongs to the UPF0262 family.

The chain is UPF0262 protein RHE_CH00582 from Rhizobium etli (strain ATCC 51251 / DSM 11541 / JCM 21823 / NBRC 15573 / CFN 42).